A 141-amino-acid chain; its full sequence is Nucleoside triphosphatase NudI (141 aa).

The region spanning 1–141 (MRQRTIVCPL…RHTLALKGLL (141 aa)) is the Nudix hydrolase domain. The Nudix box signature appears at 38–59 (GGVEPGERIEEALRREIREELG).

It belongs to the Nudix hydrolase family. NudI subfamily. Monomer. It depends on Mg(2+) as a cofactor.

It carries out the reaction a ribonucleoside 5'-triphosphate + H2O = a ribonucleoside 5'-phosphate + diphosphate + H(+). It catalyses the reaction a 2'-deoxyribonucleoside 5'-triphosphate + H2O = a 2'-deoxyribonucleoside 5'-phosphate + diphosphate + H(+). The catalysed reaction is dUTP + H2O = dUMP + diphosphate + H(+). The enzyme catalyses dTTP + H2O = dTMP + diphosphate + H(+). It carries out the reaction dCTP + H2O = dCMP + diphosphate + H(+). Functionally, catalyzes the hydrolysis of nucleoside triphosphates, with a preference for pyrimidine deoxynucleoside triphosphates (dUTP, dTTP and dCTP). The protein is Nucleoside triphosphatase NudI of Salmonella heidelberg (strain SL476).